The chain runs to 277 residues: Glycerol-3-phosphate acyltransferase (277 aa).

5 consecutive transmembrane segments (helical) span residues 3–23, 55–75, 79–99, 111–131, and 155–175; these read LFIF…AIIV, IMVM…AKLL, PVTV…PVFF, IGAL…TWLL, and LILV…ILVL. Residues 207–277 form a disordered region; it reads SPATSAEQEF…PKTKTVKEKE (71 aa). Positions 216–239 are enriched in basic and acidic residues; it reads FPGKEVIDTNIDETEKTEQAEAVK. Composition is skewed to basic residues over residues 240–253 and 262–271; these read KPKV…AKKT and KPKSTKPKTK.

This sequence belongs to the PlsY family. As to quaternary structure, probably interacts with PlsX.

It is found in the cell inner membrane. The enzyme catalyses an acyl phosphate + sn-glycerol 3-phosphate = a 1-acyl-sn-glycero-3-phosphate + phosphate. Its pathway is lipid metabolism; phospholipid metabolism. Functionally, catalyzes the transfer of an acyl group from acyl-phosphate (acyl-PO(4)) to glycerol-3-phosphate (G3P) to form lysophosphatidic acid (LPA). This enzyme utilizes acyl-phosphate as fatty acyl donor, but not acyl-CoA or acyl-ACP. In Legionella pneumophila (strain Corby), this protein is Glycerol-3-phosphate acyltransferase.